A 1161-amino-acid chain; its full sequence is Cell wall protein DAN4 (1161 aa).

An N-terminal signal peptide occupies residues Met-1–Ala-19. 4 disordered regions span residues Thr-123–Ser-309, Thr-326–Asn-345, Thr-354–Gly-547, and Ser-691–Ala-713. Residues Thr-134–Thr-286 are 46 X 3 AA tandem repeats of T-[SP]-T. Positions Thr-354–Ser-372 are enriched in low complexity. 14 consecutive repeat copies span residues Ala-373 to Ser-384, Val-385 to Ser-396, Ala-397 to Ser-408, Val-409 to Ser-420, Ala-421 to Ser-432, Val-433 to Ser-444, Ala-445 to Ser-456, Val-457 to Ser-468, Ala-469 to Ser-480, Val-481 to Ser-492, Ala-493 to Ser-504, Val-505 to Ser-516, Ala-517 to Ser-528, and Val-529 to Thr-540. The segment at Ala-373 to Thr-540 is 14 X 12 AA approximate tandem repeats. A compositionally biased stretch (polar residues) spans Ala-373–Gly-547. 2 tandem repeats follow at residues Glu-826–Glu-913 and Glu-914–Glu-1001. The segment at Glu-826 to Ala-1040 is 2.5 X 88 AA approximate tandem repeats. One copy of the 2-3; truncated repeat lies at Glu-1002–Ala-1040. Residue Asn-1137 is the site of GPI-anchor amidated asparagine attachment. Residues Gly-1138 to Leu-1161 constitute a propeptide, removed in mature form.

This sequence belongs to the SRP1/TIP1 family. Extensively O-glycosylated. Post-translationally, the GPI-anchor is attached to the protein in the endoplasmic reticulum and serves to target the protein to the cell surface. There, the glucosamine-inositol phospholipid moiety is cleaved off and the GPI-modified mannoprotein is covalently attached via its lipidless GPI glycan remnant to the 1,6-beta-glucan of the outer cell wall layer.

It localises to the secreted. Its subcellular location is the cell wall. It is found in the cell membrane. Component of the cell wall. This chain is Cell wall protein DAN4, found in Saccharomyces cerevisiae (strain ATCC 204508 / S288c) (Baker's yeast).